Here is a 341-residue protein sequence, read N- to C-terminus: MAMLTIVVDAMGGDNAPACVVEGTVEALRESGNRFEILLIGQEDKVTPLLKEYESESLNMRFMHAPEVITMEDVPAIAVKSKQESSLVQGLKLCKAKEADAFVSAGNTGAMMAASLFVLGRLPGVQRPTIYAYFPRLGEGLTNIVDVGANVDCKPEHLVQFAEMLTIYQRYAASIDNPTVGLLNIGEEEGKGPEYLKQTWNLLKAAAEEKKINFIGNVEGHDILAGKASIVVCDGLVGNTILKFGESIPHFLGSLFKPALEKMVVSGKLDQSAAALAGQAFKQIFEPFDVETFGGVPFLGVDGISIVGHGRSSSRAIKNMIYMAEHMIEQRVNERIAAMLS.

The protein belongs to the PlsX family. Homodimer. Probably interacts with PlsY.

It is found in the cytoplasm. The catalysed reaction is a fatty acyl-[ACP] + phosphate = an acyl phosphate + holo-[ACP]. It functions in the pathway lipid metabolism; phospholipid metabolism. Catalyzes the reversible formation of acyl-phosphate (acyl-PO(4)) from acyl-[acyl-carrier-protein] (acyl-ACP). This enzyme utilizes acyl-ACP as fatty acyl donor, but not acyl-CoA. This chain is Phosphate acyltransferase, found in Chlorobaculum parvum (strain DSM 263 / NCIMB 8327) (Chlorobium vibrioforme subsp. thiosulfatophilum).